The following is a 406-amino-acid chain: ATP-dependent RNA helicase eIF4A (406 aa).

Positions 25-53 (DSFDAMDLKPELLRGVYAYGFERPSAIQQ) match the Q motif motif. The Helicase ATP-binding domain maps to 56–226 (ILPIIKGNDV…TKFMRDPVRI (171 aa)). 69-76 (AQSGTGKT) serves as a coordination point for ATP. A DEAD box motif is present at residues 174–177 (DEAD). Residues 237 to 398 (GIKQFYIAVE…EMPMNVAGKF (162 aa)) enclose the Helicase C-terminal domain.

Belongs to the DEAD box helicase family. eIF4A subfamily. As to quaternary structure, component of the eIF4F complex, which composition varies with external and internal environmental conditions. It is composed of at least eIF4A, eIF4E and eIF4G.

Its subcellular location is the cytoplasm. The catalysed reaction is ATP + H2O = ADP + phosphate + H(+). Functionally, ATP-dependent RNA helicase which is a subunit of the eIF4F complex involved in cap recognition and is required for mRNA binding to ribosome. In the current model of translation initiation, eIF4A unwinds RNA secondary structures in the 5'-UTR of mRNAs which is necessary to allow efficient binding of the small ribosomal subunit, and subsequent scanning for the initiator codon. This Aspergillus fumigatus (strain ATCC MYA-4609 / CBS 101355 / FGSC A1100 / Af293) (Neosartorya fumigata) protein is ATP-dependent RNA helicase eIF4A (tif1).